We begin with the raw amino-acid sequence, 360 residues long: Phospho-N-acetylmuramoyl-pentapeptide-transferase (360 aa).

10 consecutive transmembrane segments (helical) span residues 26-46 (AILG…KLIE), 74-94 (MGGL…GDLG), 97-117 (YVWV…IDDY), 134-154 (YILQ…TAAN), 168-188 (VMPQ…VGSS), 199-219 (GLAI…AYLS), 236-256 (SGEL…FLWF), 263-283 (VFMG…IAVL), 288-308 (ILLV…ILQV), and 338-358 (VIVR…ATLK).

This sequence belongs to the glycosyltransferase 4 family. MraY subfamily. Mg(2+) is required as a cofactor.

The protein localises to the cell inner membrane. The enzyme catalyses UDP-N-acetyl-alpha-D-muramoyl-L-alanyl-gamma-D-glutamyl-meso-2,6-diaminopimeloyl-D-alanyl-D-alanine + di-trans,octa-cis-undecaprenyl phosphate = di-trans,octa-cis-undecaprenyl diphospho-N-acetyl-alpha-D-muramoyl-L-alanyl-D-glutamyl-meso-2,6-diaminopimeloyl-D-alanyl-D-alanine + UMP. It participates in cell wall biogenesis; peptidoglycan biosynthesis. In terms of biological role, catalyzes the initial step of the lipid cycle reactions in the biosynthesis of the cell wall peptidoglycan: transfers peptidoglycan precursor phospho-MurNAc-pentapeptide from UDP-MurNAc-pentapeptide onto the lipid carrier undecaprenyl phosphate, yielding undecaprenyl-pyrophosphoryl-MurNAc-pentapeptide, known as lipid I. This is Phospho-N-acetylmuramoyl-pentapeptide-transferase from Shewanella putrefaciens (strain CN-32 / ATCC BAA-453).